The chain runs to 179 residues: uncharacterized protein (179 aa).

3 helical membrane passes run 29–49, 76–96, and 97–117; these read LLGISFFCLVIIMATSLGPLI, AKHMLVFWMVFGILTSLDAYS, and GAIISFIPLWYTMKFFFLLWA.

It belongs to the DP1 family.

It localises to the membrane. This is an uncharacterized protein from Encephalitozoon cuniculi (strain GB-M1) (Microsporidian parasite).